Reading from the N-terminus, the 407-residue chain is Snake venom metalloproteinase ACLH (407 aa).

The N-terminal stretch at 1-20 (MIQVLLVTLCLAAFPYQGSS) is a signal peptide. Residues 21-187 (IILESGNVND…PIKKASQLNL (167 aa)) constitute a propeptide that is removed on maturation. The 197-residue stretch at 193-389 (RYVELVTVVD…ENPQCILNKP (197 aa)) folds into the Peptidase M12B domain. 2 residues coordinate Ca(2+): glutamate 196 and aspartate 280. 3 disulfide bridges follow: cysteine 304–cysteine 384, cysteine 344–cysteine 368, and cysteine 346–cysteine 351. A Zn(2+)-binding site is contributed by histidine 329. The active site involves glutamate 330. Positions 333 and 339 each coordinate Zn(2+). Asparagine 367 carries an N-linked (GlcNAc...) asparagine glycan. Residues cysteine 384 and asparagine 387 each coordinate Ca(2+).

Belongs to the venom metalloproteinase (M12B) family. P-I subfamily. As to quaternary structure, monomer. Zn(2+) serves as cofactor. In terms of processing, contains sialic acid terminally alpha(2-6)-linked to galactose in a complex N-glycan chain. As to expression, expressed by the venom gland.

Its subcellular location is the secreted. This zinc hemorrhagic metalloproteinase has fibrino(geno)lytic activities. It causes hemorrhage and has myonecrotic activity on both fiber types I and II. The recombinant enzyme, without post-translational modifications, also has proteolytic activity, but does not show any hemorrhagic activity. The polypeptide is Snake venom metalloproteinase ACLH (Agkistrodon contortrix laticinctus (Broad-banded copperhead)).